The sequence spans 418 residues: Serine--tRNA ligase (418 aa).

227–229 (TSE) lines the L-serine pocket. ATP-binding positions include 258 to 260 (RRE) and Val274. Position 281 (Glu281) interacts with L-serine. 345–348 (ELTS) is an ATP binding site. Residue Thr380 coordinates L-serine.

It belongs to the class-II aminoacyl-tRNA synthetase family. Type-1 seryl-tRNA synthetase subfamily. In terms of assembly, homodimer. The tRNA molecule binds across the dimer.

The protein resides in the cytoplasm. The enzyme catalyses tRNA(Ser) + L-serine + ATP = L-seryl-tRNA(Ser) + AMP + diphosphate + H(+). It catalyses the reaction tRNA(Sec) + L-serine + ATP = L-seryl-tRNA(Sec) + AMP + diphosphate + H(+). The protein operates within aminoacyl-tRNA biosynthesis; selenocysteinyl-tRNA(Sec) biosynthesis; L-seryl-tRNA(Sec) from L-serine and tRNA(Sec): step 1/1. Its function is as follows. Catalyzes the attachment of serine to tRNA(Ser). Is also able to aminoacylate tRNA(Sec) with serine, to form the misacylated tRNA L-seryl-tRNA(Sec), which will be further converted into selenocysteinyl-tRNA(Sec). In Rhodococcus jostii (strain RHA1), this protein is Serine--tRNA ligase.